The primary structure comprises 1159 residues: Cation channel sperm-associated auxiliary subunit gamma (1159 aa).

The first 35 residues, 1–35 (MCGPAMFPAGPRWPRVRVLQVLWALLAVLLASRRL), serve as a signal peptide directing secretion. Residues 36–1065 (WAIKDFEECT…IHGLPLSPKR (1030 aa)) are Extracellular-facing. 2 disulfides stabilise this stretch: C44–C105 and C159–C165. N-linked (GlcNAc...) asparagine glycosylation occurs at N102. N177 carries an N-linked (GlcNAc...) asparagine glycan. C288 and C343 form a disulfide bridge. N355 carries an N-linked (GlcNAc...) asparagine glycan. Residues C394 and C402 are joined by a disulfide bond. Residues N426 and N574 are each glycosylated (N-linked (GlcNAc...) asparagine). 5 cysteine pairs are disulfide-bonded: C638/C860, C806/C834, C882/C1046, C909/C918, and C1010/C1016. The chain crosses the membrane as a helical span at residues 1066–1087 (ALFILMVSLSVFVGLVIFYIAF). Residues 1088–1159 (CLLWPLVVKG…KEAVERQLMT (72 aa)) lie on the Cytoplasmic side of the membrane. Residues 1138–1159 (FSSRMTEDKAEPKEAVERQLMT) are disordered. Positions 1142-1159 (MTEDKAEPKEAVERQLMT) are enriched in basic and acidic residues.

It belongs to the CATSPERG family. As to quaternary structure, component of the CatSper complex or CatSpermasome composed of the core pore-forming members CATSPER1, CATSPER2, CATSPER3 and CATSPER4 as well as auxiliary members CATSPERB, CATSPERG, CATSPERD, CATSPERE, CATSPERZ, SCLO6C1, TMEM249, TMEM262 and EFCAB9. HSPA1 may be an additional auxiliary complex member. The core complex members CATSPER1, CATSPER2, CATSPER3 and CATSPER4 form a heterotetrameric channel. The auxiliary CATSPERB, CATSPERG, CATSPERD and CATSPERE subunits form a pavilion-like structure over the pore which stabilizes the complex through interactions with CATSPER4, CATSPER3, CATSPER1 and CATSPER2 respectively. TMEM262/CATSPERH interacts with CATSPERB, further stabilizing the complex. C2CD6/CATSPERT interacts at least with CATSPERD and is required for targeting the CatSper complex in the flagellar membrane.

The protein resides in the cell projection. It localises to the cilium. Its subcellular location is the flagellum membrane. Auxiliary component of the CatSper complex, a complex involved in sperm cell hyperactivation. Sperm cell hyperactivation is needed for sperm motility which is essential late in the preparation of sperm for fertilization. In Macaca fascicularis (Crab-eating macaque), this protein is Cation channel sperm-associated auxiliary subunit gamma.